Here is a 462-residue protein sequence, read N- to C-terminus: Squalene synthase ERG9 (462 aa).

Residues 406–426 (AVVLFGVVIAALVCISGLMLG) traverse the membrane as a helical segment.

Belongs to the phytoene/squalene synthase family. The cofactor is Mg(2+).

The protein localises to the endoplasmic reticulum membrane. The protein resides in the microsome. It catalyses the reaction 2 (2E,6E)-farnesyl diphosphate + NADPH + H(+) = squalene + 2 diphosphate + NADP(+). It carries out the reaction 2 (2E,6E)-farnesyl diphosphate + NADH + H(+) = squalene + 2 diphosphate + NAD(+). It participates in terpene metabolism; lanosterol biosynthesis; lanosterol from farnesyl diphosphate: step 1/3. It functions in the pathway steroid metabolism; ergosterol biosynthesis. Its function is as follows. Squalene synthase; part of the third module of ergosterol biosynthesis pathway that includes the late steps of the pathway. ERG9 produces squalene from 2 farnesyl pyrophosphate moieties. The third module or late pathway involves the ergosterol synthesis itself through consecutive reactions that mainly occur in the endoplasmic reticulum (ER) membrane. Firstly, the squalene synthase ERG9 catalyzes the condensation of 2 farnesyl pyrophosphate moieties to form squalene, which is the precursor of all steroids. Squalene synthase is crucial for balancing the incorporation of farnesyl diphosphate (FPP) into sterol and nonsterol isoprene synthesis. Secondly, squalene is converted into lanosterol by the consecutive action of the squalene epoxidase ERG1 and the lanosterol synthase ERG7. Then, the delta(24)-sterol C-methyltransferase ERG6 methylates lanosterol at C-24 to produce eburicol. Eburicol is the substrate of the sterol 14-alpha demethylase encoded by CYP51A, CYP51B and CYP51C, to yield 4,4,24-trimethyl ergosta-8,14,24(28)-trienol. CYP51B encodes the enzyme primarily responsible for sterol 14-alpha-demethylation, and plays an essential role in ascospore formation. CYP51A encodes an additional sterol 14-alpha-demethylase, induced on ergosterol depletion and responsible for the intrinsic variation in azole sensitivity. The third CYP51 isoform, CYP51C, does not encode a sterol 14-alpha-demethylase, but is required for full virulence on host wheat ears. The C-14 reductase ERG24 then reduces the C14=C15 double bond which leads to 4,4-dimethylfecosterol. A sequence of further demethylations at C-4, involving the C-4 demethylation complex containing the C-4 methylsterol oxidases ERG25, the sterol-4-alpha-carboxylate 3-dehydrogenase ERG26 and the 3-keto-steroid reductase ERG27, leads to the production of fecosterol via 4-methylfecosterol. ERG28 has a role as a scaffold to help anchor ERG25, ERG26 and ERG27 to the endoplasmic reticulum. The C-8 sterol isomerase ERG2 then catalyzes the reaction which results in unsaturation at C-7 in the B ring of sterols and thus converts fecosterol to episterol. The sterol-C5-desaturases ERG3A and ERG3BB then catalyze the introduction of a C-5 double bond in the B ring to produce 5-dehydroepisterol. The C-22 sterol desaturases ERG5A and ERG5B further convert 5-dehydroepisterol into ergosta-5,7,22,24(28)-tetraen-3beta-ol by forming the C-22(23) double bond in the sterol side chain. Finally, ergosta-5,7,22,24(28)-tetraen-3beta-ol is substrate of the C-24(28) sterol reductase ERG4 to produce ergosterol. This chain is Squalene synthase ERG9, found in Gibberella zeae (strain ATCC MYA-4620 / CBS 123657 / FGSC 9075 / NRRL 31084 / PH-1) (Wheat head blight fungus).